Consider the following 418-residue polypeptide: MMYRTVGFGTRSRNLKPWMIAVLIVLSLTVVAVTIGLLVHFLVFDQKKEYYHGSFKILDPQINNNFGQSNTYQLKDLRETTENLVDEIFIDSAWKKNYIKNQVVRLTPEEDGVKVDVIMVFQFPSTEQRAVREKKIQSILNQKIRNLRALPINASSVQVNAMSSSTGELTVQASCGKRVVPLNVNRIASGVIAPKAAWPWQASLQYDNIHQCGATLISNTWLVTAAHCFQKYKNPHQWTVSFGTKINPPLMKRNVRRFIIHEKYRSAAREYDIAVVQVSSRVTFSDDIRQICLPEASASFQPNLTVHITGFGALYYGGESQNDLREARVKIISDDVCKQPQVYGNDIKPGMFCAGYMEGIYDACRGDSGGPLVTRDLKDTWYLIGIVSWGDNCGQKDKPGVYTQVTYYRNWIASKTGI.

The Cytoplasmic segment spans residues 1–18 (MMYRTVGFGTRSRNLKPW). Residues 19–39 (MIAVLIVLSLTVVAVTIGLLV) form a helical; Signal-anchor for type II membrane protein membrane-spanning segment. Residues 40-418 (HFLVFDQKKE…RNWIASKTGI (379 aa)) are Extracellular-facing. The SEA domain occupies 47 to 164 (KKEYYHGSFK…SSVQVNAMSS (118 aa)). N-linked (GlcNAc...) asparagine glycosylation is present at Asn153. The 231-residue stretch at 187–417 (IASGVIAPKA…YRNWIASKTG (231 aa)) folds into the Peptidase S1 domain. Cys212 and Cys228 are oxidised to a cystine. Active-site charge relay system residues include His227 and Asp272. Asn303 is a glycosylation site (N-linked (GlcNAc...) asparagine). Intrachain disulfides connect Cys337/Cys353 and Cys364/Cys393. Ser368 (charge relay system) is an active-site residue.

This sequence belongs to the peptidase S1 family. In terms of assembly, may interact with ZBTB17. Expressed in esophagus, liver, colon and lung. Down-regulated in esophagus cancers.

It is found in the membrane. Its function is as follows. Probable serine protease which may play a role in cellular senescence. Overexpression inhibits cell growth and induce G1 cell cycle arrest. The chain is Transmembrane protease serine 11A (TMPRSS11A) from Homo sapiens (Human).